We begin with the raw amino-acid sequence, 334 residues long: Fructose-1,6-bisphosphatase class 1 (334 aa).

4 residues coordinate Mg(2+): E93, D117, L119, and D120. Substrate-binding positions include 120-123 (DGSS), N213, Y244, and K274. E280 contributes to the Mg(2+) binding site.

It belongs to the FBPase class 1 family. Homotetramer. Requires Mg(2+) as cofactor.

The protein localises to the cytoplasm. It carries out the reaction beta-D-fructose 1,6-bisphosphate + H2O = beta-D-fructose 6-phosphate + phosphate. It functions in the pathway carbohydrate biosynthesis; gluconeogenesis. This chain is Fructose-1,6-bisphosphatase class 1, found in Flavobacterium johnsoniae (strain ATCC 17061 / DSM 2064 / JCM 8514 / BCRC 14874 / CCUG 350202 / NBRC 14942 / NCIMB 11054 / UW101) (Cytophaga johnsonae).